The primary structure comprises 319 residues: Ninja-family protein Os07g0602900 (319 aa).

Disordered stretches follow at residues 1–26, 69–152, and 181–234; these read MAASRDFLGGFGGEVGGAAVAGEKGG, LPGG…DAMY, and AEAM…LTMR. The segment covering 70–79 has biased composition (gly residues); sequence PGGGGGGAGG. A compositionally biased stretch (basic and acidic residues) spans 105-118; that stretch reads ERWRRREMQSLKRL. Residues 185–196 show a composition bias toward polar residues; sequence DTSSSDNASCQN. Low complexity predominate over residues 225-234; that stretch reads LRTLRSLTMR.

This sequence belongs to the Ninja family.

The protein resides in the nucleus. The polypeptide is Ninja-family protein Os07g0602900 (Oryza sativa subsp. japonica (Rice)).